Here is a 160-residue protein sequence, read N- to C-terminus: Ribosome maturation factor RimP (160 aa).

This sequence belongs to the RimP family.

The protein resides in the cytoplasm. Functionally, required for maturation of 30S ribosomal subunits. The polypeptide is Ribosome maturation factor RimP (Orientia tsutsugamushi (strain Boryong) (Rickettsia tsutsugamushi)).